The chain runs to 308 residues: Pantothenate kinase (308 aa).

93 to 100 is a binding site for ATP; it reads GSVAVGKS.

Belongs to the prokaryotic pantothenate kinase family.

The protein localises to the cytoplasm. The catalysed reaction is (R)-pantothenate + ATP = (R)-4'-phosphopantothenate + ADP + H(+). Its pathway is cofactor biosynthesis; coenzyme A biosynthesis; CoA from (R)-pantothenate: step 1/5. The chain is Pantothenate kinase from Corynebacterium diphtheriae (strain ATCC 700971 / NCTC 13129 / Biotype gravis).